The sequence spans 475 residues: Glucose-6-phosphate 1-dehydrogenase gcd1 (475 aa).

NADP(+) contacts are provided by R42 and K146. D-glucose 6-phosphate contacts are provided by K146, E214, and D233. Residue H238 is the Proton acceptor of the active site. K332 is a binding site for D-glucose 6-phosphate. 2 residues coordinate NADP(+): R342 and R365.

The protein belongs to the glucose-6-phosphate dehydrogenase family.

It localises to the cytoplasm. It catalyses the reaction D-glucose 6-phosphate + NADP(+) = 6-phospho-D-glucono-1,5-lactone + NADPH + H(+). Its pathway is carbohydrate degradation; pentose phosphate pathway; D-ribulose 5-phosphate from D-glucose 6-phosphate (oxidative stage): step 1/3. Its function is as follows. Catalyzes the rate-limiting step of the oxidative pentose-phosphate pathway, which represents a route for the dissimilation of carbohydrates besides glycolysis. The main function of this enzyme is to provide reducing power (NADPH) and pentose phosphates for fatty acid and nucleic acid synthesis. The chain is Glucose-6-phosphate 1-dehydrogenase gcd1 from Schizosaccharomyces pombe (strain 972 / ATCC 24843) (Fission yeast).